A 235-amino-acid polypeptide reads, in one-letter code: Carbonic anhydrase 1 (235 aa).

In terms of domain architecture, Alpha-carbonic anhydrase spans 1–235; that stretch reads GNKQSPVDIK…LKGRTVKASF (235 aa). Catalysis depends on histidine 40, which acts as the Proton donor/acceptor. Positions 69, 71, and 94 each coordinate Zn(2+). Substrate is bound by residues threonine 174 and 174–175; that span reads TH.

Belongs to the alpha-carbonic anhydrase family. Zn(2+) serves as cofactor.

The protein resides in the cytoplasm. It catalyses the reaction hydrogencarbonate + H(+) = CO2 + H2O. The enzyme catalyses urea = cyanamide + H2O. With respect to regulation, inhibited by acetazolamide. Catalyzes the reversible hydration of carbon dioxide. Can hydrate cyanamide to urea. This is Carbonic anhydrase 1 (CA1) from Oryctolagus cuniculus (Rabbit).